The following is a 429-amino-acid chain: Enolase (429 aa).

Position 163 (Q163) interacts with (2R)-2-phosphoglycerate. Residue E205 is the Proton donor of the active site. The Mg(2+) site is built by D242, E287, and D314. (2R)-2-phosphoglycerate-binding residues include K339, R368, S369, and K390. Residue K339 is the Proton acceptor of the active site.

It belongs to the enolase family. The cofactor is Mg(2+).

The protein localises to the cytoplasm. The protein resides in the secreted. Its subcellular location is the cell surface. The enzyme catalyses (2R)-2-phosphoglycerate = phosphoenolpyruvate + H2O. The protein operates within carbohydrate degradation; glycolysis; pyruvate from D-glyceraldehyde 3-phosphate: step 4/5. Functionally, catalyzes the reversible conversion of 2-phosphoglycerate (2-PG) into phosphoenolpyruvate (PEP). It is essential for the degradation of carbohydrates via glycolysis. This chain is Enolase, found in Anaeromyxobacter dehalogenans (strain 2CP-C).